Consider the following 399-residue polypeptide: Elongation factor Tu (399 aa).

The region spanning 10–209 (KPHVNIGTIG…AVDSYIPTPK (200 aa)) is the tr-type G domain. The tract at residues 19–26 (GHVDHGKT) is G1. 19-26 (GHVDHGKT) contacts GTP. Thr26 serves as a coordination point for Mg(2+). The tract at residues 60-64 (GITIA) is G2. Residues 81-84 (DCPG) are G3. GTP contacts are provided by residues 81 to 85 (DCPGH) and 136 to 139 (NKTD). Residues 136–139 (NKTD) form a G4 region. The segment at 174–176 (SAL) is G5.

The protein belongs to the TRAFAC class translation factor GTPase superfamily. Classic translation factor GTPase family. EF-Tu/EF-1A subfamily. Monomer.

It localises to the cytoplasm. The catalysed reaction is GTP + H2O = GDP + phosphate + H(+). GTP hydrolase that promotes the GTP-dependent binding of aminoacyl-tRNA to the A-site of ribosomes during protein biosynthesis. The protein is Elongation factor Tu of Campylobacter hominis (strain ATCC BAA-381 / DSM 21671 / CCUG 45161 / LMG 19568 / NCTC 13146 / CH001A).